A 149-amino-acid polypeptide reads, in one-letter code: Large ribosomal subunit protein uL13 (149 aa).

The protein belongs to the universal ribosomal protein uL13 family. As to quaternary structure, part of the 50S ribosomal subunit.

Its function is as follows. This protein is one of the early assembly proteins of the 50S ribosomal subunit, although it is not seen to bind rRNA by itself. It is important during the early stages of 50S assembly. This Chlorobium chlorochromatii (strain CaD3) protein is Large ribosomal subunit protein uL13.